The sequence spans 419 residues: UDP-N-acetylglucosamine 1-carboxyvinyltransferase (419 aa).

22 to 23 (KN) provides a ligand contact to phosphoenolpyruvate. A UDP-N-acetyl-alpha-D-glucosamine-binding site is contributed by R91. C115 acts as the Proton donor in catalysis. Residue C115 is modified to 2-(S-cysteinyl)pyruvic acid O-phosphothioketal. UDP-N-acetyl-alpha-D-glucosamine contacts are provided by residues 120 to 124 (RPVDL), 160 to 163 (KVSV), D305, and V327.

The protein belongs to the EPSP synthase family. MurA subfamily.

Its subcellular location is the cytoplasm. The catalysed reaction is phosphoenolpyruvate + UDP-N-acetyl-alpha-D-glucosamine = UDP-N-acetyl-3-O-(1-carboxyvinyl)-alpha-D-glucosamine + phosphate. The protein operates within cell wall biogenesis; peptidoglycan biosynthesis. In terms of biological role, cell wall formation. Adds enolpyruvyl to UDP-N-acetylglucosamine. The polypeptide is UDP-N-acetylglucosamine 1-carboxyvinyltransferase (Escherichia coli (strain K12 / MC4100 / BW2952)).